We begin with the raw amino-acid sequence, 264 residues long: Thymidylate synthase (264 aa).

R21 contributes to the dUMP binding site. H51 is a (6R)-5,10-methylene-5,6,7,8-tetrahydrofolate binding site. 126 to 127 (RR) contacts dUMP. Residue C146 is the Nucleophile of the active site. Residues 166 to 169 (RSAD), N177, and 207 to 209 (HIY) each bind dUMP. D169 contacts (6R)-5,10-methylene-5,6,7,8-tetrahydrofolate. S263 contacts (6R)-5,10-methylene-5,6,7,8-tetrahydrofolate.

It belongs to the thymidylate synthase family. Bacterial-type ThyA subfamily. In terms of assembly, homodimer.

The protein localises to the cytoplasm. The catalysed reaction is dUMP + (6R)-5,10-methylene-5,6,7,8-tetrahydrofolate = 7,8-dihydrofolate + dTMP. Its pathway is pyrimidine metabolism; dTTP biosynthesis. Its function is as follows. Catalyzes the reductive methylation of 2'-deoxyuridine-5'-monophosphate (dUMP) to 2'-deoxythymidine-5'-monophosphate (dTMP) while utilizing 5,10-methylenetetrahydrofolate (mTHF) as the methyl donor and reductant in the reaction, yielding dihydrofolate (DHF) as a by-product. This enzymatic reaction provides an intracellular de novo source of dTMP, an essential precursor for DNA biosynthesis. This is Thymidylate synthase from Exiguobacterium sp. (strain ATCC BAA-1283 / AT1b).